A 270-amino-acid chain; its full sequence is Tryptophan synthase alpha chain (270 aa).

Catalysis depends on proton acceptor residues glutamate 57 and aspartate 68.

Belongs to the TrpA family. Tetramer of two alpha and two beta chains.

The enzyme catalyses (1S,2R)-1-C-(indol-3-yl)glycerol 3-phosphate + L-serine = D-glyceraldehyde 3-phosphate + L-tryptophan + H2O. It participates in amino-acid biosynthesis; L-tryptophan biosynthesis; L-tryptophan from chorismate: step 5/5. In terms of biological role, the alpha subunit is responsible for the aldol cleavage of indoleglycerol phosphate to indole and glyceraldehyde 3-phosphate. The protein is Tryptophan synthase alpha chain of Mycobacterium leprae (strain Br4923).